Here is a 276-residue protein sequence, read N- to C-terminus: 2-dehydro-3-deoxyphosphooctonate aldolase (276 aa).

Belongs to the KdsA family.

It localises to the cytoplasm. The catalysed reaction is D-arabinose 5-phosphate + phosphoenolpyruvate + H2O = 3-deoxy-alpha-D-manno-2-octulosonate-8-phosphate + phosphate. It functions in the pathway carbohydrate biosynthesis; 3-deoxy-D-manno-octulosonate biosynthesis; 3-deoxy-D-manno-octulosonate from D-ribulose 5-phosphate: step 2/3. The protein is 2-dehydro-3-deoxyphosphooctonate aldolase of Stenotrophomonas maltophilia (strain K279a).